The following is a 233-amino-acid chain: MAGLGFDETELRLGLPGAGELAARSSGKRGFAETIDLKLKLQPAAPAAVSGEEGAQEDKEDADAAAAAADEKMSMKRSASQSSVVTAEPDPDKPRAPKAQVVGWPPVRSFRKNVLAEKCKAAALVKVSMDGAPYLRKIDVAMYKSYPELSMAFQNMFTSFTIGKCGSHQQLKESNKLRDDLEYVPTYEDKDGDWMLVGDVPWEMFVESCKRLRIMKGSEAIGLAPRAVEKCKS.

Disordered stretches follow at residues 1–27 and 46–100; these read MAGLGFDETELRLGLPGAGELAARSSG and PAAV…PKAQ. The EAR-like (transcriptional repression) motif lies at 11–15; sequence LRLGL. The segment covering 54 to 63 has biased composition (acidic residues); sequence GAQEDKEDAD. The PB1 domain maps to 122-217; the sequence is AALVKVSMDG…SCKRLRIMKG (96 aa).

It belongs to the Aux/IAA family. Homodimers and heterodimers. Highly expressed in etiolated shoots. Expressed in roots.

It localises to the nucleus. Functionally, aux/IAA proteins are short-lived transcriptional factors that function as repressors of early auxin response genes at low auxin concentrations. In Oryza sativa subsp. japonica (Rice), this protein is Auxin-responsive protein IAA11 (IAA11).